We begin with the raw amino-acid sequence, 313 residues long: UDP-N-acetylenolpyruvoylglucosamine reductase (313 aa).

Residues 31–207 (VGGPADALVA…TGVDLGLGFD (177 aa)) enclose the FAD-binding PCMH-type domain. The active site involves arginine 180. The active-site Proton donor is the cysteine 236. Glutamate 307 is an active-site residue.

The protein belongs to the MurB family. Requires FAD as cofactor.

It localises to the cytoplasm. The catalysed reaction is UDP-N-acetyl-alpha-D-muramate + NADP(+) = UDP-N-acetyl-3-O-(1-carboxyvinyl)-alpha-D-glucosamine + NADPH + H(+). Its pathway is cell wall biogenesis; peptidoglycan biosynthesis. Its function is as follows. Cell wall formation. The protein is UDP-N-acetylenolpyruvoylglucosamine reductase of Desulfosudis oleivorans (strain DSM 6200 / JCM 39069 / Hxd3) (Desulfococcus oleovorans).